A 676-amino-acid chain; its full sequence is Head-specific guanylate cyclase (676 aa).

The 128-residue stretch at 466–593 folds into the Guanylate cyclase domain; that stretch reads TILFSDIVGF…HSVTIANKFE (128 aa).

The protein belongs to the adenylyl cyclase class-4/guanylyl cyclase family. Heterodimer. In terms of tissue distribution, head, where it is preferentially expressed in the CNS and the retina. Not found in bodies.

Its subcellular location is the cytoplasm. The enzyme catalyses GTP = 3',5'-cyclic GMP + diphosphate. Its function is as follows. May have a role in phototransduction. Catalyzes the conversion of GTP to cGMP, a common second messenger that is utilized in a wide variety of cells and signal transduction pathways. A second subunit is required for enzyme activity. The chain is Head-specific guanylate cyclase (Gycalpha99B) from Drosophila melanogaster (Fruit fly).